Here is a 689-residue protein sequence, read N- to C-terminus: Outer spore wall assembly protein SHE10 (689 aa).

An N-terminal signal peptide occupies residues 1 to 18 (MKILTKFFLLLVVTTCSL). The tract at residues 259–308 (TKAKSKSKPRVNASASARGNARAGAKAGAKAGTSEISASATADPTTSASA) is disordered. Over residues 270–308 (NASASARGNARAGAKAGAKAGTSEISASATADPTTSASA) the composition is skewed to low complexity. A coiled-coil region spans residues 406–435 (NKTKTVSEVLQNRYKNLNRAIQDINCTCET). Residues 610–626 (EQESKQREDSPRMDRDS) are compositionally biased toward basic and acidic residues. A disordered region spans residues 610-689 (EQESKQREDS…TVQNNVTLQI (80 aa)). Composition is skewed to polar residues over residues 627–637 (TQNVENSNTTT), 655–670 (QNGT…GPDS), and 677–689 (METT…TLQI).

This sequence belongs to the SHE10 family. As to quaternary structure, component of the mitochondria-localized RNase mitochondrial RNA-processing (RNase MRP) composed of one single RNA encoded by the NME1 gene and at least 31 proteins. Absent in the nucleus-localized RNase MRP (NuMRP).

The protein localises to the mitochondrion. Its function is as follows. Involved in spore wall assembly. May be a component of the mitochondrial RNase MRP (MtMRP), a ribonucleoprotein endoribonuclease involved in the cleaving RNA transcripts to generate primers for DNA replication in mitochondria. This chain is Outer spore wall assembly protein SHE10, found in Zygosaccharomyces rouxii (strain ATCC 2623 / CBS 732 / NBRC 1130 / NCYC 568 / NRRL Y-229).